The primary structure comprises 122 residues: Large ribosomal subunit protein uL14 (122 aa).

Belongs to the universal ribosomal protein uL14 family. In terms of assembly, part of the 50S ribosomal subunit. Forms a cluster with proteins L3 and L19. In the 70S ribosome, L14 and L19 interact and together make contacts with the 16S rRNA in bridges B5 and B8.

Functionally, binds to 23S rRNA. Forms part of two intersubunit bridges in the 70S ribosome. This chain is Large ribosomal subunit protein uL14, found in Ligilactobacillus salivarius (strain UCC118) (Lactobacillus salivarius).